Here is a 107-residue protein sequence, read N- to C-terminus: U1-lycotoxin-Ls1b (107 aa).

A signal peptide spans 1–20 (MMKVLVVVALLVTLISYSSS). The propeptide occupies 21-41 (EGIDDLEADELSSLMANEQTR). 4 cysteine pairs are disulfide-bonded: Cys-44–Cys-59, Cys-51–Cys-68, Cys-58–Cys-86, and Cys-70–Cys-84.

Belongs to the neurotoxin 19 (CSTX) family. 04 (U1-Lctx) subfamily. As to expression, expressed by the venom gland.

It localises to the secreted. The protein is U1-lycotoxin-Ls1b of Lycosa singoriensis (Wolf spider).